The following is a 296-amino-acid chain: Arginase (296 aa).

Residues H97, D120, H122, and D124 each coordinate Mn(2+). Substrate is bound by residues 122–126, 133–135, and D176; these read HGDLN and SGN. Mn(2+) contacts are provided by D223 and D225. Residues T237 and E268 each contribute to the substrate site.

It belongs to the arginase family. It depends on Mn(2+) as a cofactor.

The enzyme catalyses L-arginine + H2O = urea + L-ornithine. The protein operates within nitrogen metabolism; urea cycle; L-ornithine and urea from L-arginine: step 1/1. Its function is as follows. Involved in the catabolism of arginine. The protein is Arginase of Bacillus subtilis (strain 168).